A 346-amino-acid polypeptide reads, in one-letter code: DNA-directed RNA polymerases I and III subunit RPAC1 (346 aa).

Residue A2 is modified to N-acetylalanine.

It belongs to the archaeal Rpo3/eukaryotic RPB3 RNA polymerase subunit family. As to quaternary structure, component of the RNA polymerase I and RNA polymerase III complexes consisting of at least 13 and 17 subunits, respectively. Pol I complex consists of a ten-subunit catalytic core composed of POLR1A/RPA1, POLR1B/RPA2, POLR1C/RPAC1, POLR1D/RPAC2, POLR1H/RPA12, POLR2E/RPABC1, POLR2F/RPABC2, POLR2H/RPABC3, POLR2K/RPABC4 and POLR2L/RPABC5; a mobile stalk subunit POLR1F/RPA43 protruding from the core and additional subunits homologous to general transcription factors POLR1E/RPA49 and POLR1G/RPA34. Part of Pol I pre-initiation complex (PIC), in which Pol I core assembles with RRN3 and promoter-bound UTBF and SL1/TIF-IB complex. Pol III complex consists of a ten-subunit catalytic core composed of POLR3A/RPC1, POLR3B/RPC2, POLR1C/RPAC1, POLR1D/RPAC2, POLR3K/RPC10, POLR2E/RPABC1, POLR2F/RPABC2, POLR2H/RPABC3, POLR2K/RPABC4 and POLR2L/RPABC5; a mobile stalk composed of two subunits POLR3H/RPC8 and CRCP/RPC9, protruding from the core and functioning primarily in transcription initiation; and additional subunits homologous to general transcription factors of the RNA polymerase II machinery, POLR3C/RPC3-POLR3F/RPC6-POLR3G/RPC7 heterotrimer required for transcription initiation and POLR3D/RPC4-POLR3E/RPC5 heterodimer involved in both transcription initiation and termination.

The protein resides in the nucleus. It is found in the cytoplasm. Its subcellular location is the cytosol. Functionally, DNA-dependent RNA polymerase catalyzes the transcription of DNA into RNA using the four ribonucleoside triphosphates as substrates. Common component of RNA polymerases I and III which synthesize ribosomal RNA precursors and short non-coding RNAs including 5S rRNA, snRNAs, tRNAs and miRNAs, respectively. POLR1C/RPAC1 is part of the polymerase core and may function as a clamp element that moves to open and close the cleft. This Bos taurus (Bovine) protein is DNA-directed RNA polymerases I and III subunit RPAC1 (POLR1C).